A 122-amino-acid polypeptide reads, in one-letter code: Large ribosomal subunit protein uL14 (122 aa).

This sequence belongs to the universal ribosomal protein uL14 family. Part of the 50S ribosomal subunit. Forms a cluster with proteins L3 and L19. In the 70S ribosome, L14 and L19 interact and together make contacts with the 16S rRNA in bridges B5 and B8.

Its function is as follows. Binds to 23S rRNA. Forms part of two intersubunit bridges in the 70S ribosome. The polypeptide is Large ribosomal subunit protein uL14 (Chloroflexus aurantiacus (strain ATCC 29366 / DSM 635 / J-10-fl)).